Here is a 354-residue protein sequence, read N- to C-terminus: Inactive ADP-ribosyltransferase arh2 (354 aa).

It belongs to the ADP-ribosylglycohydrolase family. Expressed in heart (at protein level). A short form is detected in both heart and tadpole tail (at protein level).

The protein resides in the cytoplasm. Its subcellular location is the myofibril. It localises to the sarcomere. Required for myofibril assembly and outgrowth of the cardiac chambers in the developing heart. Appears to be catalytically inactive, showing no activity against O-acetyl-ADP-ribose. The protein is Inactive ADP-ribosyltransferase arh2 (adprhl1) of Xenopus laevis (African clawed frog).